The chain runs to 359 residues: Bergaptol O-methyltransferase (359 aa).

A bergaptol-binding site is contributed by histidine 126. 5 residues coordinate S-adenosyl-L-homocysteine: serine 179, glycine 203, aspartate 226, aspartate 246, and lysine 260. Histidine 264 is a bergaptol binding site. Histidine 264 (proton acceptor) is an active-site residue.

This sequence belongs to the class I-like SAM-binding methyltransferase superfamily. Cation-independent O-methyltransferase family. COMT subfamily. Homodimer. As to expression, mostly expressed in roots and, to a lower extent, in stems and leaves.

The protein resides in the cytoplasm. It catalyses the reaction bergaptol + S-adenosyl-L-methionine = bergapten + S-adenosyl-L-homocysteine. It participates in aromatic compound metabolism. The protein operates within secondary metabolite biosynthesis. In terms of biological role, O-methyltransferase involved in the biosynthesis of furocoumarins natural products such as bergapten, a photosensitizer used for medical purpose such as treating psoriasis and vitiligo or facilitating resistance to microbial infection and other stresses. Catalyzes specifically the methylation of bergaptol. Not active on xanthotol, isoscopoletin, scopoletin and esculetin. The polypeptide is Bergaptol O-methyltransferase (Kitagawia praeruptora (Peucedanum praeruptorum)).